Consider the following 325-residue polypeptide: Adenine deaminase (325 aa).

Positions 8, 10, and 186 each coordinate Zn(2+). The Proton donor role is filled by glutamate 189. Aspartate 267 serves as a coordination point for Zn(2+). Aspartate 268 lines the substrate pocket.

The protein belongs to the metallo-dependent hydrolases superfamily. Adenosine and AMP deaminases family. Adenine deaminase type 2 subfamily. It depends on Zn(2+) as a cofactor.

It catalyses the reaction adenine + H2O + H(+) = hypoxanthine + NH4(+). Its function is as follows. Catalyzes the hydrolytic deamination of adenine to hypoxanthine. Plays an important role in the purine salvage pathway and in nitrogen catabolism. The sequence is that of Adenine deaminase from Chelativorans sp. (strain BNC1).